A 354-amino-acid polypeptide reads, in one-letter code: DNA polymerase IV (354 aa).

In terms of domain architecture, UmuC spans 6-187 (IIHVDCDCFY…LPVARLHGVG (182 aa)). Residues D10 and D105 each coordinate Mg(2+). Residue E106 is part of the active site.

This sequence belongs to the DNA polymerase type-Y family. In terms of assembly, monomer. Mg(2+) serves as cofactor.

Its subcellular location is the cytoplasm. It catalyses the reaction DNA(n) + a 2'-deoxyribonucleoside 5'-triphosphate = DNA(n+1) + diphosphate. Functionally, poorly processive, error-prone DNA polymerase involved in untargeted mutagenesis. Copies undamaged DNA at stalled replication forks, which arise in vivo from mismatched or misaligned primer ends. These misaligned primers can be extended by PolIV. Exhibits no 3'-5' exonuclease (proofreading) activity. May be involved in translesional synthesis, in conjunction with the beta clamp from PolIII. The protein is DNA polymerase IV of Pseudomonas putida (strain ATCC 47054 / DSM 6125 / CFBP 8728 / NCIMB 11950 / KT2440).